The chain runs to 459 residues: ATP-dependent protease ATPase subunit HslU (459 aa).

ATP contacts are provided by residues Val-18, 60 to 65 (GVGKTE), Asp-272, Glu-337, and Arg-409.

It belongs to the ClpX chaperone family. HslU subfamily. In terms of assembly, a double ring-shaped homohexamer of HslV is capped on each side by a ring-shaped HslU homohexamer. The assembly of the HslU/HslV complex is dependent on binding of ATP.

It is found in the cytoplasm. In terms of biological role, ATPase subunit of a proteasome-like degradation complex; this subunit has chaperone activity. The binding of ATP and its subsequent hydrolysis by HslU are essential for unfolding of protein substrates subsequently hydrolyzed by HslV. HslU recognizes the N-terminal part of its protein substrates and unfolds these before they are guided to HslV for hydrolysis. The sequence is that of ATP-dependent protease ATPase subunit HslU from Thermoanaerobacter sp. (strain X514).